Here is a 137-residue protein sequence, read N- to C-terminus: Putative transcription elongation factor S-II-like protein 055R (137 aa).

Residues 85-136 form a TFIIS-type zinc finger; that stretch reads DFITCPYEVSEGVLRCGKCDCTKILWFSKQTRSMDEPTTIFASCSNCKTRWT. Positions 89, 103, 128, and 131 each coordinate Zn(2+).

Belongs to the IIV-6 349L family.

This chain is Putative transcription elongation factor S-II-like protein 055R, found in Aedes vexans (Inland floodwater mosquito).